The chain runs to 404 residues: Alanyl-tRNA editing protein AlaX-L (404 aa).

4 residues coordinate Zn(2+): H104, H108, C202, and H206.

This sequence belongs to the class-II aminoacyl-tRNA synthetase family. Editing domain AlaX-L subfamily. Zn(2+) serves as cofactor.

Its subcellular location is the cytoplasm. Its function is as follows. Functions in trans to edit the amino acid moiety from mischarged charged tRNA(Ala). The chain is Alanyl-tRNA editing protein AlaX-L (alaXL) from Pyrococcus horikoshii (strain ATCC 700860 / DSM 12428 / JCM 9974 / NBRC 100139 / OT-3).